Here is a 94-residue protein sequence, read N- to C-terminus: RxLR effector protein PITG_15972 (94 aa).

The N-terminal stretch at 1–21 (MRAVYILAMACAATLQASSSA) is a signal peptide. Positions 50–65 (RLLRVEDKEEETEEER) match the RxLR-dEER motif.

The protein belongs to the RxLR effector family.

Its subcellular location is the secreted. It localises to the host cytoplasm. The protein localises to the host nucleus. In terms of biological role, effector that enhances P.infestans colonization of Nicotiana benthamiana leaves. The sequence is that of RxLR effector protein PITG_15972 from Phytophthora infestans (strain T30-4) (Potato late blight agent).